Consider the following 85-residue polypeptide: Selenoprotein W (85 aa).

Residues 10 to 13 constitute a cross-link (cysteinyl-selenocysteine (Cys-Sec); redox-active); it reads CGAU. Selenocysteine 13 is a non-standard amino acid (selenocysteine).

This sequence belongs to the SelWTH family. Selenoprotein W subfamily. Expressed ubiquitously with predominant expression in the pituitary, spinal cord, sciatic nerve, cerebral cortex, cerebral nuclei, thalamus, cerebellum, muscle, cartilage, trachea, gizzard and artery. Weakly expressed in pancreas, testis, ovary, kidney and veins.

It is found in the cytoplasm. Its function is as follows. Plays a role as a glutathione (GSH)-dependent antioxidant. May be involved in a redox-related process. May play a role in the myopathies of selenium deficiency. This is Selenoprotein W from Gallus gallus (Chicken).